The primary structure comprises 257 residues: Na(+)-translocating NADH-quinone reductase subunit C (257 aa).

Residues 13–33 form a helical membrane-spanning segment; the sequence is LTVVVLLSLICSLIVASAAVL. Thr224 carries the post-translational modification FMN phosphoryl threonine.

This sequence belongs to the NqrC family. As to quaternary structure, composed of six subunits; NqrA, NqrB, NqrC, NqrD, NqrE and NqrF. Requires FMN as cofactor.

It localises to the cell inner membrane. It carries out the reaction a ubiquinone + n Na(+)(in) + NADH + H(+) = a ubiquinol + n Na(+)(out) + NAD(+). NQR complex catalyzes the reduction of ubiquinone-1 to ubiquinol by two successive reactions, coupled with the transport of Na(+) ions from the cytoplasm to the periplasm. NqrA to NqrE are probably involved in the second step, the conversion of ubisemiquinone to ubiquinol. In Haemophilus ducreyi (strain 35000HP / ATCC 700724), this protein is Na(+)-translocating NADH-quinone reductase subunit C.